We begin with the raw amino-acid sequence, 609 residues long: Beta-(1--&gt;2)glucan export ATP-binding/permease protein NdvA (609 aa).

The ABC transmembrane type-1 domain occupies 21 to 311; the sequence is GWILAGANLL…VVSFINSVFM (291 aa). 6 helical membrane passes run 22 to 42, 68 to 88, 146 to 166, 167 to 187, 248 to 268, and 285 to 305; these read WILA…PVLF, LLAV…TVAL, EHFA…YINW, RLAI…TLVV, WWAV…LAIF, and IVMF…VVSF. The region spanning 345–579 is the ABC transporter domain; sequence VEFNDVSFSY…GGHFAQLAKA (235 aa). Residue 378–385 participates in ATP binding; the sequence is GPTGAGKS.

This sequence belongs to the ABC transporter superfamily. Beta-(1--&gt;2)glucan exporter (TC 3.A.1.108.1) family. As to quaternary structure, homodimer.

Its subcellular location is the cell inner membrane. The enzyme catalyses [(1-&gt;2)-beta-D-glucosyl](n)(in) + ATP + H2O = [(1-&gt;2)-beta-D-glucosyl](n)(out) + ADP + phosphate + H(+). Its function is as follows. Involved in beta-(1--&gt;2)glucan export. Transmembrane domains (TMD) form a pore in the inner membrane and the ATP-binding domain (NBD) is responsible for energy generation. This chain is Beta-(1--&gt;2)glucan export ATP-binding/permease protein NdvA, found in Nitrobacter winogradskyi (strain ATCC 25391 / DSM 10237 / CIP 104748 / NCIMB 11846 / Nb-255).